Here is a 53-residue protein sequence, read N- to C-terminus: Sec-independent protein translocase protein TatA (53 aa).

Residues 1 to 21 (MGMSFSHLLIVLLIIFVLFGA) traverse the membrane as a helical segment.

The protein belongs to the TatA/E family. In terms of assembly, the Tat system comprises two distinct complexes: a TatABC complex, containing multiple copies of TatA, TatB and TatC subunits, and a separate TatA complex, containing only TatA subunits. Substrates initially bind to the TatABC complex, which probably triggers association of the separate TatA complex to form the active translocon.

The protein localises to the cell inner membrane. In terms of biological role, part of the twin-arginine translocation (Tat) system that transports large folded proteins containing a characteristic twin-arginine motif in their signal peptide across membranes. TatA could form the protein-conducting channel of the Tat system. This Rickettsia akari (strain Hartford) protein is Sec-independent protein translocase protein TatA.